Here is a 193-residue protein sequence, read N- to C-terminus: dCTP deaminase (193 aa).

Residues 110-115 (RSSLAR), Asp-128, 136-138 (VLE), Tyr-171, Lys-178, and Gln-182 each bind dCTP. The Proton donor/acceptor role is filled by Glu-138.

The protein belongs to the dCTP deaminase family. Homotrimer.

It catalyses the reaction dCTP + H2O + H(+) = dUTP + NH4(+). Its pathway is pyrimidine metabolism; dUMP biosynthesis; dUMP from dCTP (dUTP route): step 1/2. Its function is as follows. Catalyzes the deamination of dCTP to dUTP. The chain is dCTP deaminase from Buchnera aphidicola subsp. Acyrthosiphon pisum (strain APS) (Acyrthosiphon pisum symbiotic bacterium).